The chain runs to 577 residues: Proline--tRNA ligase (577 aa).

It belongs to the class-II aminoacyl-tRNA synthetase family. ProS type 1 subfamily. As to quaternary structure, homodimer.

The protein resides in the cytoplasm. It carries out the reaction tRNA(Pro) + L-proline + ATP = L-prolyl-tRNA(Pro) + AMP + diphosphate. In terms of biological role, catalyzes the attachment of proline to tRNA(Pro) in a two-step reaction: proline is first activated by ATP to form Pro-AMP and then transferred to the acceptor end of tRNA(Pro). As ProRS can inadvertently accommodate and process non-cognate amino acids such as alanine and cysteine, to avoid such errors it has two additional distinct editing activities against alanine. One activity is designated as 'pretransfer' editing and involves the tRNA(Pro)-independent hydrolysis of activated Ala-AMP. The other activity is designated 'posttransfer' editing and involves deacylation of mischarged Ala-tRNA(Pro). The misacylated Cys-tRNA(Pro) is not edited by ProRS. This is Proline--tRNA ligase from Thermotoga neapolitana (strain ATCC 49049 / DSM 4359 / NBRC 107923 / NS-E).